A 490-amino-acid chain; its full sequence is Protein nucleotidyltransferase YdiU (490 aa).

8 residues coordinate ATP: Gly86, Gly88, Arg89, Lys109, Asp121, Gly122, Arg172, and Arg179. Residue Asp248 is the Proton acceptor of the active site. Residues Asn249 and Asp258 each contribute to the Mg(2+) site. ATP is bound at residue Asp258.

It belongs to the SELO family. Mg(2+) serves as cofactor. It depends on Mn(2+) as a cofactor.

The catalysed reaction is L-seryl-[protein] + ATP = 3-O-(5'-adenylyl)-L-seryl-[protein] + diphosphate. It catalyses the reaction L-threonyl-[protein] + ATP = 3-O-(5'-adenylyl)-L-threonyl-[protein] + diphosphate. The enzyme catalyses L-tyrosyl-[protein] + ATP = O-(5'-adenylyl)-L-tyrosyl-[protein] + diphosphate. It carries out the reaction L-histidyl-[protein] + UTP = N(tele)-(5'-uridylyl)-L-histidyl-[protein] + diphosphate. The catalysed reaction is L-seryl-[protein] + UTP = O-(5'-uridylyl)-L-seryl-[protein] + diphosphate. It catalyses the reaction L-tyrosyl-[protein] + UTP = O-(5'-uridylyl)-L-tyrosyl-[protein] + diphosphate. Nucleotidyltransferase involved in the post-translational modification of proteins. It can catalyze the addition of adenosine monophosphate (AMP) or uridine monophosphate (UMP) to a protein, resulting in modifications known as AMPylation and UMPylation. The sequence is that of Protein nucleotidyltransferase YdiU from Rhizobium meliloti (strain 1021) (Ensifer meliloti).